Reading from the N-terminus, the 573-residue chain is 2-isopropylmalate synthase (573 aa).

The 278-residue stretch at 37 to 314 folds into the Pyruvate carboxyltransferase domain; it reads PRWLSTDLRD…DPQIDFSDID (278 aa). Positions 46, 253, 255, and 289 each coordinate Mg(2+). The tract at residues 456-573 is regulatory domain; the sequence is NPDNPWGRIQ…VVSAVNRATR (118 aa).

It belongs to the alpha-IPM synthase/homocitrate synthase family. LeuA type 2 subfamily. In terms of assembly, homodimer. Mg(2+) is required as a cofactor.

Its subcellular location is the cytoplasm. The catalysed reaction is 3-methyl-2-oxobutanoate + acetyl-CoA + H2O = (2S)-2-isopropylmalate + CoA + H(+). It participates in amino-acid biosynthesis; L-leucine biosynthesis; L-leucine from 3-methyl-2-oxobutanoate: step 1/4. Functionally, catalyzes the condensation of the acetyl group of acetyl-CoA with 3-methyl-2-oxobutanoate (2-ketoisovalerate) to form 3-carboxy-3-hydroxy-4-methylpentanoate (2-isopropylmalate). The sequence is that of 2-isopropylmalate synthase from Streptomyces coelicolor (strain ATCC BAA-471 / A3(2) / M145).